The primary structure comprises 342 residues: Methionine import ATP-binding protein MetN (342 aa).

The ABC transporter domain occupies 2–241; it reads ITLEQVTKIY…PQQPITKRFV (240 aa). 38 to 45 contributes to the ATP binding site; sequence GYSGAGKS.

This sequence belongs to the ABC transporter superfamily. Methionine importer (TC 3.A.1.24) family. The complex is composed of two ATP-binding proteins (MetN), two transmembrane proteins (MetI) and a solute-binding protein (MetQ).

It is found in the cell membrane. It catalyses the reaction L-methionine(out) + ATP + H2O = L-methionine(in) + ADP + phosphate + H(+). It carries out the reaction D-methionine(out) + ATP + H2O = D-methionine(in) + ADP + phosphate + H(+). In terms of biological role, part of the ABC transporter complex MetNIQ involved in methionine import. Responsible for energy coupling to the transport system. This chain is Methionine import ATP-binding protein MetN, found in Geobacillus kaustophilus (strain HTA426).